The primary structure comprises 87 residues: Virulence protein PagD (87 aa).

Residues 1–20 (MKHHAFMLWSLLIFSFHVLA) form the signal peptide. The interval 46 to 87 (QPPTNTDKKQARQISSPSCPTTKPMMSAPVNDARKGNTFSRT) is disordered. Polar residues predominate over residues 57-66 (RQISSPSCPT).

In terms of biological role, putative function in virulence. Could be involved in promoting S.typhimurium survival within macrophages. This Salmonella typhimurium (strain LT2 / SGSC1412 / ATCC 700720) protein is Virulence protein PagD (pagD).